The sequence spans 205 residues: Small ribosomal subunit protein uS4 (205 aa).

The span at 1 to 16 (MSKRETTKYKIDRRMG) shows a compositional bias: basic and acidic residues. Positions 1-46 (MSKRETTKYKIDRRMGENIWGRPKSPVNRRDYGPGQHGQRRKGKLS) are disordered. The S4 RNA-binding domain maps to 94–157 (SRLDAVIYRA…KQLVLVLESV (64 aa)).

It belongs to the universal ribosomal protein uS4 family. As to quaternary structure, part of the 30S ribosomal subunit. Contacts protein S5. The interaction surface between S4 and S5 is involved in control of translational fidelity.

Functionally, one of the primary rRNA binding proteins, it binds directly to 16S rRNA where it nucleates assembly of the body of the 30S subunit. In terms of biological role, with S5 and S12 plays an important role in translational accuracy. The sequence is that of Small ribosomal subunit protein uS4 from Bartonella henselae (strain ATCC 49882 / DSM 28221 / CCUG 30454 / Houston 1) (Rochalimaea henselae).